We begin with the raw amino-acid sequence, 279 residues long: Pantothenate synthetase (279 aa).

26 to 33 is a binding site for ATP; it reads MGNLHEGH. The active-site Proton donor is the H33. Residue Q57 participates in (R)-pantoate binding. Q57 contributes to the beta-alanine binding site. 144 to 147 is a binding site for ATP; that stretch reads GKKD. Q150 is a binding site for (R)-pantoate. ATP is bound by residues V173 and 181 to 184; that span reads LSSR.

Belongs to the pantothenate synthetase family. As to quaternary structure, homodimer.

The protein localises to the cytoplasm. It catalyses the reaction (R)-pantoate + beta-alanine + ATP = (R)-pantothenate + AMP + diphosphate + H(+). The protein operates within cofactor biosynthesis; (R)-pantothenate biosynthesis; (R)-pantothenate from (R)-pantoate and beta-alanine: step 1/1. Functionally, catalyzes the condensation of pantoate with beta-alanine in an ATP-dependent reaction via a pantoyl-adenylate intermediate. The protein is Pantothenate synthetase of Burkholderia ambifaria (strain ATCC BAA-244 / DSM 16087 / CCUG 44356 / LMG 19182 / AMMD) (Burkholderia cepacia (strain AMMD)).